Consider the following 115-residue polypeptide: Nucleoid-associated protein tlr0723 (115 aa).

The protein belongs to the YbaB/EbfC family. As to quaternary structure, homodimer.

It localises to the cytoplasm. Its subcellular location is the nucleoid. Binds to DNA and alters its conformation. May be involved in regulation of gene expression, nucleoid organization and DNA protection. In Thermosynechococcus vestitus (strain NIES-2133 / IAM M-273 / BP-1), this protein is Nucleoid-associated protein tlr0723.